The primary structure comprises 197 residues: Nucleoid occlusion factor SlmA (197 aa).

The region spanning I7 to L67 is the HTH tetR-type domain. A DNA-binding region (H-T-H motif) is located at residues T30–F49. A coiled-coil region spans residues D109 to I136.

Belongs to the nucleoid occlusion factor SlmA family. In terms of assembly, homodimer. Interacts with FtsZ.

Its subcellular location is the cytoplasm. It is found in the nucleoid. Required for nucleoid occlusion (NO) phenomenon, which prevents Z-ring formation and cell division over the nucleoid. Acts as a DNA-associated cell division inhibitor that binds simultaneously chromosomal DNA and FtsZ, and disrupts the assembly of FtsZ polymers. SlmA-DNA-binding sequences (SBS) are dispersed on non-Ter regions of the chromosome, preventing FtsZ polymerization at these regions. The protein is Nucleoid occlusion factor SlmA of Shewanella baltica (strain OS223).